The chain runs to 751 residues: Proton-associated sugar transporter A (751 aa).

6 helical membrane passes run 93-113 (ILFG…PVLL), 123-143 (SLVW…LGAW), 155-175 (RPFI…LLNG), 191-211 (WGIL…DSAD), 233-253 (IHAL…GIHW), and 268-288 (VIYI…LVSI). A Phosphothreonine modification is found at threonine 500. The next 6 helical transmembrane spans lie at 536–556 (GWLS…EVVF), 576–596 (VTMG…YSAI), 606–626 (VRTL…LATL), 630–650 (LYVV…LCTL), 688–708 (FLAQ…VGSA), and 710–730 (GVMY…SLCV).

This sequence belongs to the glycoside-pentoside-hexuronide (GPH) cation symporter transporter (TC 2.A.2) family. As to expression, predominantly expressed in brain.

The protein resides in the membrane. It carries out the reaction D-galactose(in) + H(+)(in) = D-galactose(out) + H(+)(out). The catalysed reaction is D-glucose(out) + H(+)(out) = D-glucose(in) + H(+)(in). In terms of biological role, proton-associated glucose transporter in the brain. This Rattus norvegicus (Rat) protein is Proton-associated sugar transporter A.